The chain runs to 373 residues: Sorting nexin-21 (373 aa).

A disordered region spans residues 1-107 (MHRGTQEGAM…RSPPPDGQWG (107 aa)). Over residues 21–37 (ALAGDGPGEAAASPEAE) the composition is skewed to low complexity. The segment covering 55–65 (SRLSGTLSFTS) has biased composition (polar residues). Over residues 66-81 (AEDDEDDEDEDDEEAG) the composition is skewed to acidic residues. Residues 129–246 (QRLLFEVTSA…DFFVLPELRR (118 aa)) form the PX domain. A 1,2-diacyl-sn-glycero-3-phospho-(1D-myo-inositol-3-phosphate) contacts are provided by Arg171, Ser173, Lys198, and Arg212.

This sequence belongs to the sorting nexin family. As to quaternary structure, monomer. As to expression, highly expressed in fetus liver, but only weakly expressed in brain, skeleton muscle, smooth muscle, and cardiac muscle, kidney, and adrenal gland.

Its subcellular location is the cytoplasmic vesicle membrane. It is found in the early endosome membrane. Functionally, binds to membranes enriched in phosphatidylinositol 3-phosphate (PtdIns(P3)) and phosphatidylinositol 4,5-bisphosphate. May be involved in several stages of intracellular trafficking. The polypeptide is Sorting nexin-21 (SNX21) (Homo sapiens (Human)).